The primary structure comprises 481 residues: ATP synthase subunit beta, chloroplastic (481 aa).

ATP is bound at residue G161–T168.

Belongs to the ATPase alpha/beta chains family. F-type ATPases have 2 components, CF(1) - the catalytic core - and CF(0) - the membrane proton channel. CF(1) has five subunits: alpha(3), beta(3), gamma(1), delta(1), epsilon(1). CF(0) has four main subunits: a(1), b(1), b'(1) and c(9-12).

Its subcellular location is the plastid. It is found in the chloroplast thylakoid membrane. The enzyme catalyses ATP + H2O + 4 H(+)(in) = ADP + phosphate + 5 H(+)(out). Its function is as follows. Produces ATP from ADP in the presence of a proton gradient across the membrane. The catalytic sites are hosted primarily by the beta subunits. The protein is ATP synthase subunit beta, chloroplastic of Mesostigma viride (Green alga).